The primary structure comprises 93 residues: CRISPR-associated endoribonuclease Cas2 3 (93 aa).

Aspartate 10 contributes to the Mg(2+) binding site.

The protein belongs to the CRISPR-associated endoribonuclease Cas2 protein family. In terms of assembly, homodimer, forms a heterotetramer with a Cas1 homodimer. Requires Mg(2+) as cofactor.

CRISPR (clustered regularly interspaced short palindromic repeat), is an adaptive immune system that provides protection against mobile genetic elements (viruses, transposable elements and conjugative plasmids). CRISPR clusters contain sequences complementary to antecedent mobile elements and target invading nucleic acids. CRISPR clusters are transcribed and processed into CRISPR RNA (crRNA). Functions as a ssRNA-specific endoribonuclease. Involved in the integration of spacer DNA into the CRISPR cassette. This Chloroflexus aurantiacus (strain ATCC 29366 / DSM 635 / J-10-fl) protein is CRISPR-associated endoribonuclease Cas2 3.